The sequence spans 301 residues: Homoserine O-acetyltransferase (301 aa).

Cys-142 serves as the catalytic Acyl-thioester intermediate. Lys-163 and Ser-192 together coordinate substrate. His-235 functions as the Proton acceptor in the catalytic mechanism. Glu-237 is an active-site residue. Arg-249 lines the substrate pocket.

Belongs to the MetA family.

Its subcellular location is the cytoplasm. It carries out the reaction L-homoserine + acetyl-CoA = O-acetyl-L-homoserine + CoA. It participates in amino-acid biosynthesis; L-methionine biosynthesis via de novo pathway; O-acetyl-L-homoserine from L-homoserine: step 1/1. Transfers an acetyl group from acetyl-CoA to L-homoserine, forming acetyl-L-homoserine. The sequence is that of Homoserine O-acetyltransferase from Bacillus subtilis (strain 168).